The sequence spans 142 residues: Small heat shock protein IbpB (142 aa).

In terms of domain architecture, sHSP spans 26–137 (AGESQSFPPY…AAQRIAISER (112 aa)).

It belongs to the small heat shock protein (HSP20) family. Homodimer. Forms homomultimers of about 100-150 subunits at optimal growth temperatures. Conformation changes to oligomers at high temperatures or high ionic concentrations. The decrease in size of the multimers is accompanied by an increase in chaperone activity.

It localises to the cytoplasm. Its function is as follows. Associates with aggregated proteins, together with IbpA, to stabilize and protect them from irreversible denaturation and extensive proteolysis during heat shock and oxidative stress. Aggregated proteins bound to the IbpAB complex are more efficiently refolded and reactivated by the ATP-dependent chaperone systems ClpB and DnaK/DnaJ/GrpE. Its activity is ATP-independent. This chain is Small heat shock protein IbpB, found in Escherichia coli O7:K1 (strain IAI39 / ExPEC).